A 601-amino-acid polypeptide reads, in one-letter code: Proline--tRNA ligase (601 aa).

Belongs to the class-II aminoacyl-tRNA synthetase family. ProS type 1 subfamily. Homodimer.

The protein resides in the cytoplasm. The enzyme catalyses tRNA(Pro) + L-proline + ATP = L-prolyl-tRNA(Pro) + AMP + diphosphate. In terms of biological role, catalyzes the attachment of proline to tRNA(Pro) in a two-step reaction: proline is first activated by ATP to form Pro-AMP and then transferred to the acceptor end of tRNA(Pro). As ProRS can inadvertently accommodate and process non-cognate amino acids such as alanine and cysteine, to avoid such errors it has two additional distinct editing activities against alanine. One activity is designated as 'pretransfer' editing and involves the tRNA(Pro)-independent hydrolysis of activated Ala-AMP. The other activity is designated 'posttransfer' editing and involves deacylation of mischarged Ala-tRNA(Pro). The misacylated Cys-tRNA(Pro) is not edited by ProRS. This chain is Proline--tRNA ligase, found in Tropheryma whipplei (strain TW08/27) (Whipple's bacillus).